A 227-amino-acid chain; its full sequence is MAYPFQLGLQDASSPIMEELTNFHDHTLMIVFLISSLVLYIISSMLTTKMTHTSTMDAQEVETIWTVLPAVILILIALPSLRILYMMDEINNPVLTVKTMGHQWYWSYEYTDYESLCFDSYMVPTNDLKPGELRLLEVDNRVVLPMELPIRMLISSEDVLHSWAVPSLGLKTDAIPGRLNQATLTSNRPGLFYGQCSEICGSNHSFMPIVLEMVPLKHFENWSTSMI.

Over 1–14 (MAYPFQLGLQDASS) the chain is Mitochondrial intermembrane. Residues 15–45 (PIMEELTNFHDHTLMIVFLISSLVLYIISSM) traverse the membrane as a helical segment. Topologically, residues 46–59 (LTTKMTHTSTMDAQ) are mitochondrial matrix. The helical transmembrane segment at 60–87 (EVETIWTVLPAVILILIALPSLRILYMM) threads the bilayer. Residues 88-227 (DEINNPVLTV…HFENWSTSMI (140 aa)) lie on the Mitochondrial intermembrane side of the membrane. The Cu cation site is built by histidine 161, cysteine 196, glutamate 198, cysteine 200, histidine 204, and methionine 207. Glutamate 198 provides a ligand contact to Mg(2+).

Belongs to the cytochrome c oxidase subunit 2 family. As to quaternary structure, component of the cytochrome c oxidase (complex IV, CIV), a multisubunit enzyme composed of 14 subunits. The complex is composed of a catalytic core of 3 subunits MT-CO1, MT-CO2 and MT-CO3, encoded in the mitochondrial DNA, and 11 supernumerary subunits COX4I, COX5A, COX5B, COX6A, COX6B, COX6C, COX7A, COX7B, COX7C, COX8 and NDUFA4, which are encoded in the nuclear genome. The complex exists as a monomer or a dimer and forms supercomplexes (SCs) in the inner mitochondrial membrane with NADH-ubiquinone oxidoreductase (complex I, CI) and ubiquinol-cytochrome c oxidoreductase (cytochrome b-c1 complex, complex III, CIII), resulting in different assemblies (supercomplex SCI(1)III(2)IV(1) and megacomplex MCI(2)III(2)IV(2)). Found in a complex with TMEM177, COA6, COX18, COX20, SCO1 and SCO2. Interacts with TMEM177 in a COX20-dependent manner. Interacts with COX20. Interacts with COX16. Cu cation is required as a cofactor.

The protein localises to the mitochondrion inner membrane. The enzyme catalyses 4 Fe(II)-[cytochrome c] + O2 + 8 H(+)(in) = 4 Fe(III)-[cytochrome c] + 2 H2O + 4 H(+)(out). Functionally, component of the cytochrome c oxidase, the last enzyme in the mitochondrial electron transport chain which drives oxidative phosphorylation. The respiratory chain contains 3 multisubunit complexes succinate dehydrogenase (complex II, CII), ubiquinol-cytochrome c oxidoreductase (cytochrome b-c1 complex, complex III, CIII) and cytochrome c oxidase (complex IV, CIV), that cooperate to transfer electrons derived from NADH and succinate to molecular oxygen, creating an electrochemical gradient over the inner membrane that drives transmembrane transport and the ATP synthase. Cytochrome c oxidase is the component of the respiratory chain that catalyzes the reduction of oxygen to water. Electrons originating from reduced cytochrome c in the intermembrane space (IMS) are transferred via the dinuclear copper A center (CU(A)) of subunit 2 and heme A of subunit 1 to the active site in subunit 1, a binuclear center (BNC) formed by heme A3 and copper B (CU(B)). The BNC reduces molecular oxygen to 2 water molecules using 4 electrons from cytochrome c in the IMS and 4 protons from the mitochondrial matrix. The protein is Cytochrome c oxidase subunit 2 (MT-CO2) of Lophuromys flavopunctatus (Yellow-spotted brush-furred rat).